A 305-amino-acid chain; its full sequence is Peroxisome biogenesis factor 2 (305 aa).

Residues 1 to 15 are Peroxisomal matrix-facing; it reads MAAREESTQSANRVL. A helical transmembrane segment spans residues 16 to 42; the sequence is RISQLDALELNKALEQLVWSQFTQCFH. Residues 43-48 are Cytoplasmic-facing; it reads GFKPGL. A helical membrane pass occupies residues 49-74; it reads LARFEPEVKAFLWLFLWRFTIYSKNA. Residues 75–98 are Peroxisomal matrix-facing; it reads TVGQSVLNIQHKNDSSPNPVYQPP. Residues 99-125 traverse the membrane as a helical segment; that stretch reads SKNQKLLYAVCTIGGRWLEERCYDLFR. Residues 126–133 are Cytoplasmic-facing; that stretch reads NRHLASFG. A helical membrane pass occupies residues 134 to 160; sequence KAKQCMNFVVGLLKLGELMNFLIFLQK. The Peroxisomal matrix segment spans residues 161–187; sequence GKFATLTERLLGIHSVFCKPQNMREVG. Residues 188 to 211 traverse the membrane as a helical segment; sequence FEYMNRELLWHGFAEFLIFLLPLI. Residues 212-305 are Cytoplasmic-facing; it reads NIQKLKAKLS…GIQMSEVNAL (94 aa). Zn(2+)-binding residues include Cys244, Cys247, Cys259, His261, Cys264, Cys267, Cys280, and Cys283. An RING-type zinc finger spans residues 244–284; sequence CALCGEWPTMPHTIGCEHVFCYYCVKSSFLFDIYFTCPKCG.

The protein belongs to the pex2/pex10/pex12 family. As to quaternary structure, component of the PEX2-PEX10-PEX12 retrotranslocation channel, composed of PEX2, PEX10 and PEX12. Post-translationally, forms intramolecular and intermolecular disulfide bonds in response to reactive oxygen species (ROS), promoting higher stability.

It is found in the peroxisome membrane. The catalysed reaction is [E2 ubiquitin-conjugating enzyme]-S-ubiquitinyl-L-cysteine + [acceptor protein]-L-cysteine = [E2 ubiquitin-conjugating enzyme]-L-cysteine + [acceptor protein]-S-ubiquitinyl-L-cysteine.. The enzyme catalyses S-ubiquitinyl-[E2 ubiquitin-conjugating enzyme]-L-cysteine + [acceptor protein]-L-lysine = [E2 ubiquitin-conjugating enzyme]-L-cysteine + N(6)-ubiquitinyl-[acceptor protein]-L-lysine.. It functions in the pathway protein modification; protein ubiquitination. Its function is as follows. E3 ubiquitin-protein ligase component of a retrotranslocation channel required for peroxisome organization by mediating export of the PEX5 receptor from peroxisomes to the cytosol, thereby promoting PEX5 recycling. The retrotranslocation channel is composed of PEX2, PEX10 and PEX12; each subunit contributing transmembrane segments that coassemble into an open channel that specifically allows the passage of PEX5 through the peroxisomal membrane. PEX2 also regulates peroxisome organization by acting as a E3 ubiquitin-protein ligase. PEX2 ubiquitinates PEX5 during its passage through the retrotranslocation channel: catalyzes monoubiquitination of PEX5 at 'Cys-11', a modification that acts as a signal for PEX5 extraction into the cytosol. Required for pexophagy in response to starvation by mediating ubiquitination of peroxisomal proteins, such as PEX5 and ABCD3/PMP70. Also involved in the response to reactive oxygen species (ROS) by mediating 'Lys-48'-linked polyubiquitination and subsequent degradation of PNPLA2/ATGL, thereby regulating lipolysis. The chain is Peroxisome biogenesis factor 2 from Mus musculus (Mouse).